The following is an 84-amino-acid chain: Hepcidin (84 aa).

The signal sequence occupies residues Met1–Gly24. The propeptide occupies Ser25–Gln54. Cystine bridges form between Cys66–Cys82, Cys69–Cys72, Cys70–Cys78, and Cys73–Cys81.

The protein belongs to the hepcidin family. As to quaternary structure, interacts with SLC40A1; this interaction promotes SLC40A1 rapid ubiquitination. Highest expression in liver and to a lesser extent in heart and brain. Low levels in lung, tonsils, salivary gland, trachea, prostate gland, adrenal gland and thyroid gland. Secreted into the urine and blood. Expressed by hepatocytes.

The protein localises to the secreted. Functionally, liver-produced hormone that constitutes the main circulating regulator of iron absorption and distribution across tissues. Acts by promoting endocytosis and degradation of ferroportin/SLC40A1, leading to the retention of iron in iron-exporting cells and decreased flow of iron into plasma. Controls the major flows of iron into plasma: absorption of dietary iron in the intestine, recycling of iron by macrophages, which phagocytose old erythrocytes and other cells, and mobilization of stored iron from hepatocytes. In terms of biological role, has strong antimicrobial activity against E.coli ML35P N.cinerea and weaker against S.epidermidis, S.aureus and group b streptococcus bacteria. Active against the fungus C.albicans. No activity against P.aeruginosa. This is Hepcidin from Homo sapiens (Human).